The following is a 618-amino-acid chain: Carotenoid cleavage dioxygenase 7, chloroplastic (618 aa).

The transit peptide at 1–31 (MSLPIPPKFLPPLKSPPIHHHQTPPPLAPPR) directs the protein to the chloroplast. Positions 11–34 (PPLKSPPIHHHQTPPPLAPPRAAI) are disordered. Residues H266, H319, H398, and H612 each coordinate Fe cation.

It belongs to the carotenoid oxygenase family. It depends on Fe(2+) as a cofactor. Expressed in flowers, siliques, inflorescence stems, petiole, leaves and roots.

Its subcellular location is the plastid. The protein localises to the chloroplast. The catalysed reaction is 9-cis-beta-carotene + O2 = 9-cis-10'-apo-beta-carotenal + beta-ionone. Involved in strigolactones biosynthesis by cleaving asymmetrically a variety of linear and cyclic carotenoids at the 9-10 double bond. Produces one C(13) beta-ionone and the C(27) 10'-apo-beta-carotenal. Strigolactones are hormones that inhibit tillering and shoot branching through the MAX-dependent pathway, contribute to the regulation of shoot architectural response to phosphate-limiting conditions and function as rhizosphere signal that stimulates hyphal branching of arbuscular mycorrhizal fungi and trigger seed germination of root parasitic weeds. No activity on lycopene, lutein, zeaxanthin, violaxanthin or neoxanthin. Probably not involved in abscisic acid biosynthesis. This is Carotenoid cleavage dioxygenase 7, chloroplastic (CCD7) from Arabidopsis thaliana (Mouse-ear cress).